The primary structure comprises 1219 residues: Pheromone-regulated membrane protein 10 (1219 aa).

Over residues 1–11 (MMRTQSDEHVA) the composition is skewed to basic and acidic residues. 4 disordered regions span residues 1–273 (MMRT…IERE), 303–490 (LASF…DPFT), 503–533 (HDDDEDEDNHGNFLTYDAADGSVTPTHEDYV), and 555–713 (EGNK…RPVK). A compositionally biased stretch (acidic residues) spans 42 to 53 (DENDDGHDDSDE). Residues 57-68 (SVVIPTPSVVIV) are compositionally biased toward low complexity. Over residues 104–115 (LKSPGTPTTYSP) the composition is skewed to polar residues. Low complexity predominate over residues 136–155 (GSSLSSTTLMNTLLNSSGLG). Composition is skewed to acidic residues over residues 159–171 (TESEEDDDEDEEV) and 219–231 (QEEETVASTDDDG). Composition is skewed to basic and acidic residues over residues 259–273 (ADRAARADAPLIERE), 330–346 (DDQRDQRDSHLALRREN), and 395–421 (LDRRLEDIKEKRAEDKEKRAEDNEKER). A compositionally biased stretch (basic residues) spans 422–432 (QHHHHNHHHHH). Positions 435–446 (ETGPNTGASSPF) are enriched in polar residues. Positions 448–470 (EEEKDREAEEAEILRDQARDLVN) are enriched in basic and acidic residues. Low complexity predominate over residues 565-577 (TTVGDGTSTGDVS). The span at 598–615 (KSKTKTTQKLGLKKKKKE) shows a compositional bias: basic residues. Positions 616 to 641 (LLKIIEDQRKEKEENKKRPKWYDKSR) are enriched in basic and acidic residues. The span at 642–652 (STSPSPGGTPA) shows a compositional bias: low complexity. Basic residues predominate over residues 653–673 (PHHHHHIPGLHLHHHTKGHQR). The segment covering 693 to 713 (GGDKPPDRPRSLRSEALRPVK) has biased composition (basic and acidic residues). Helical transmembrane passes span 864–884 (PPWLCVIFFACGTGVVSPYAF), 888–908 (WADIPMCIILGSVVGFFQIIV), 918–938 (VFEVSMSILISFLARAIGTIS), 945–965 (FCFAAIAQGSLAIILPGYIVL), 983–1003 (MFYAVIYSMFLGFGITLGAVV), 1021–1041 (LDPLWRILFVPLYSFFIALVN), 1049–1069 (PSMLLISGAGYTVTYFVGANI), 1075–1095 (SSYLTSAIGAFTIGILGNLYS), 1100–1120 (GLAFAAMLPGIFVQVPSGVAS), and 1184–1204 (LGFTMIQVAIGITVGLFAATL).

Belongs to the ThrE exporter (TC 2.A.79) family.

The protein resides in the membrane. The polypeptide is Pheromone-regulated membrane protein 10 (Yarrowia lipolytica (strain CLIB 122 / E 150) (Yeast)).